Consider the following 376-residue polypeptide: Lipid-A-disaccharide synthase (376 aa).

This sequence belongs to the LpxB family.

It catalyses the reaction a lipid X + a UDP-2-N,3-O-bis[(3R)-3-hydroxyacyl]-alpha-D-glucosamine = a lipid A disaccharide + UDP + H(+). The protein operates within bacterial outer membrane biogenesis; LPS lipid A biosynthesis. In terms of biological role, condensation of UDP-2,3-diacylglucosamine and 2,3-diacylglucosamine-1-phosphate to form lipid A disaccharide, a precursor of lipid A, a phosphorylated glycolipid that anchors the lipopolysaccharide to the outer membrane of the cell. In Pseudomonas fluorescens (strain Pf0-1), this protein is Lipid-A-disaccharide synthase.